The following is a 127-amino-acid chain: Small ribosomal subunit protein uS11 (127 aa).

This sequence belongs to the universal ribosomal protein uS11 family. As to quaternary structure, part of the 30S ribosomal subunit. Interacts with proteins S7 and S18. Binds to IF-3.

In terms of biological role, located on the platform of the 30S subunit, it bridges several disparate RNA helices of the 16S rRNA. Forms part of the Shine-Dalgarno cleft in the 70S ribosome. The sequence is that of Small ribosomal subunit protein uS11 from Streptococcus pyogenes serotype M49 (strain NZ131).